The primary structure comprises 256 residues: Thioredoxin-dependent peroxide reductase, mitochondrial (256 aa).

Residues 1–61 (MAAAVGRLLR…KLFSTSSSYH (61 aa)) constitute a mitochondrion transit peptide. A Thioredoxin domain is found at 63-221 (PAVTQHAPYF…TLRLVKAFQY (159 aa)). Lys-83 carries the post-translational modification N6-succinyllysine. Lys-91 is modified (N6-acetyllysine; alternate). Position 91 is an N6-succinyllysine; alternate (Lys-91). The Cysteine sulfenic acid (-SOH) intermediate role is filled by Cys-108. Thr-146 is subject to Phosphothreonine.

It belongs to the peroxiredoxin family. AhpC/Prx1 subfamily. As to quaternary structure, homodimer; disulfide-linked, upon oxidation. 6 homodimers assemble to form a ring-like dodecamer. Interacts with NEK6. Interacts with LRRK2. Interacts with MAP3K13. Interacts with RPS6KC1 (via PX domain). In terms of processing, phosphorylated by LRRK2; phosphorylation reduces perodixase activity. The enzyme can be inactivated by further oxidation of the cysteine sulfenic acid (C(P)-SOH) to sulphinic acid (C(P)-SO2H) and sulphonic acid (C(P)-SO3H) instead of its condensation to a disulfide bond. Post-translationally, S-palmitoylated.

The protein localises to the mitochondrion. It localises to the cytoplasm. Its subcellular location is the early endosome. It catalyses the reaction a hydroperoxide + [thioredoxin]-dithiol = an alcohol + [thioredoxin]-disulfide + H2O. In terms of biological role, thiol-specific peroxidase that catalyzes the reduction of hydrogen peroxide and organic hydroperoxides to water and alcohols, respectively. Plays a role in cell protection against oxidative stress by detoxifying peroxides. Acts synergistically with MAP3K13 to regulate the activation of NF-kappa-B in the cytosol. Required for the maintenance of physical strength. The polypeptide is Thioredoxin-dependent peroxide reductase, mitochondrial (PRDX3) (Pongo abelii (Sumatran orangutan)).